Here is a 335-residue protein sequence, read N- to C-terminus: Holliday junction branch migration complex subunit RuvB (335 aa).

Residues 1-181 (MERIVEVEKF…FGMHFRLQFY (181 aa)) are large ATPase domain (RuvB-L). ATP is bound by residues Leu20, Arg21, Gly62, Lys65, Thr66, Thr67, 128–130 (EDF), Arg171, Tyr181, and Arg218. Thr66 lines the Mg(2+) pocket. Residues 182–252 (TPQELAQIIT…RTQKALEALG (71 aa)) are small ATPAse domain (RuvB-S). The tract at residues 255-335 (ERGFDELDLK…LTPNIQNSLF (81 aa)) is head domain (RuvB-H). DNA is bound by residues Arg309 and Arg314.

This sequence belongs to the RuvB family. Homohexamer. Forms an RuvA(8)-RuvB(12)-Holliday junction (HJ) complex. HJ DNA is sandwiched between 2 RuvA tetramers; dsDNA enters through RuvA and exits via RuvB. An RuvB hexamer assembles on each DNA strand where it exits the tetramer. Each RuvB hexamer is contacted by two RuvA subunits (via domain III) on 2 adjacent RuvB subunits; this complex drives branch migration. In the full resolvosome a probable DNA-RuvA(4)-RuvB(12)-RuvC(2) complex forms which resolves the HJ.

It is found in the cytoplasm. It catalyses the reaction ATP + H2O = ADP + phosphate + H(+). Functionally, the RuvA-RuvB-RuvC complex processes Holliday junction (HJ) DNA during genetic recombination and DNA repair, while the RuvA-RuvB complex plays an important role in the rescue of blocked DNA replication forks via replication fork reversal (RFR). RuvA specifically binds to HJ cruciform DNA, conferring on it an open structure. The RuvB hexamer acts as an ATP-dependent pump, pulling dsDNA into and through the RuvAB complex. RuvB forms 2 homohexamers on either side of HJ DNA bound by 1 or 2 RuvA tetramers; 4 subunits per hexamer contact DNA at a time. Coordinated motions by a converter formed by DNA-disengaged RuvB subunits stimulates ATP hydrolysis and nucleotide exchange. Immobilization of the converter enables RuvB to convert the ATP-contained energy into a lever motion, pulling 2 nucleotides of DNA out of the RuvA tetramer per ATP hydrolyzed, thus driving DNA branch migration. The RuvB motors rotate together with the DNA substrate, which together with the progressing nucleotide cycle form the mechanistic basis for DNA recombination by continuous HJ branch migration. Branch migration allows RuvC to scan DNA until it finds its consensus sequence, where it cleaves and resolves cruciform DNA. This chain is Holliday junction branch migration complex subunit RuvB, found in Nitratiruptor sp. (strain SB155-2).